The chain runs to 525 residues: NAD(P)H-quinone oxidoreductase subunit 2 (525 aa).

A run of 14 helical transmembrane segments spans residues 14 to 34, 42 to 62, 78 to 98, 117 to 137, 167 to 187, 201 to 221, 240 to 260, 276 to 296, 302 to 322, 330 to 350, 374 to 394, 396 to 416, 462 to 482, and 494 to 514; these read AIWP…VDLV, SLPA…VLQW, PVSI…VMMA, LTAT…MVFV, LLTG…LYGL, LANA…GIGF, PTPV…ALAI, AVLS…AIAQ, LLAY…VAGT, IFYL…VTLF, LCLS…GFFG, LYLF…VGLV, VGMV…NPLF, and FLGF…SLAV.

The protein belongs to the complex I subunit 2 family. NDH-1 can be composed of about 15 different subunits; different subcomplexes with different compositions have been identified which probably have different functions.

The protein localises to the cellular thylakoid membrane. The enzyme catalyses a plastoquinone + NADH + (n+1) H(+)(in) = a plastoquinol + NAD(+) + n H(+)(out). The catalysed reaction is a plastoquinone + NADPH + (n+1) H(+)(in) = a plastoquinol + NADP(+) + n H(+)(out). In terms of biological role, NDH-1 shuttles electrons from an unknown electron donor, via FMN and iron-sulfur (Fe-S) centers, to quinones in the respiratory and/or the photosynthetic chain. The immediate electron acceptor for the enzyme in this species is believed to be plastoquinone. Couples the redox reaction to proton translocation, and thus conserves the redox energy in a proton gradient. Cyanobacterial NDH-1 also plays a role in inorganic carbon-concentration. The protein is NAD(P)H-quinone oxidoreductase subunit 2 of Synechococcus sp. (strain JA-3-3Ab) (Cyanobacteria bacterium Yellowstone A-Prime).